Consider the following 126-residue polypeptide: H2B.U histone 2 (126 aa).

Positions 1–35 are disordered; that stretch reads MPEPSRSTPAPKKGSKKAITKAQKKDGKKRKRGRK. Proline 2 carries the post-translational modification N-acetylproline. Glutamate 3 carries the ADP-ribosyl glutamic acid modification. ADP-ribosylserine is present on serine 7. Lysine 12 bears the N6-(beta-hydroxybutyryl)lysine; alternate mark. N6-acetyllysine; alternate occurs at positions 12 and 13. Lysine 12 and lysine 13 each carry N6-crotonyllysine; alternate. Lysine 12 is subject to N6-lactoyllysine; alternate. Lysine 13 carries the N6-(2-hydroxyisobutyryl)lysine; alternate modification. Serine 15 is subject to Phosphoserine; by STK4/MST1. Residues lysine 16, lysine 17, lysine 21, and lysine 24 each carry the N6-acetyllysine; alternate modification. Residues lysine 16, lysine 17, lysine 21, and lysine 24 each carry the N6-crotonyllysine; alternate modification. N6-lactoyllysine; alternate occurs at positions 16, 17, 21, and 24. Lysine 17 carries the post-translational modification N6-glutaryllysine; alternate. Position 21 is an N6-(beta-hydroxybutyryl)lysine; alternate (lysine 21). N6-(2-hydroxyisobutyryl)lysine; alternate occurs at positions 21 and 24. Lysine 21 carries the post-translational modification N6-butyryllysine; alternate. Lysine 21 is covalently cross-linked (Glycyl lysine isopeptide (Lys-Gly) (interchain with G-Cter in SUMO2); alternate). Lysine 25 carries the post-translational modification N6-(2-hydroxyisobutyryl)lysine. Lysine 35 bears the N6-(beta-hydroxybutyryl)lysine; alternate mark. N6-crotonyllysine; alternate is present on lysine 35. At lysine 35 the chain carries N6-(2-hydroxyisobutyryl)lysine; alternate. Lysine 35 is subject to N6-glutaryllysine; alternate. Lysine 35 carries the N6-succinyllysine; alternate modification. Residue lysine 35 forms a Glycyl lysine isopeptide (Lys-Gly) (interchain with G-Cter in ubiquitin); alternate linkage. Position 36 is a polyADP-ribosyl glutamic acid (glutamate 36). Serine 37 carries the phosphoserine; by AMPK modification. The residue at position 44 (lysine 44) is an N6-lactoyllysine; alternate. Lysine 44, lysine 47, and lysine 58 each carry N6-(2-hydroxyisobutyryl)lysine; alternate. 2 positions are modified to N6-glutaryllysine; alternate: lysine 44 and lysine 47. Lysine 47 is modified (N6-methyllysine; alternate). Lysine 58 carries the post-translational modification N6,N6-dimethyllysine; alternate. Residue arginine 80 is modified to Dimethylated arginine. An N6-acetyllysine; alternate modification is found at lysine 86. Lysine 86 carries the post-translational modification N6-lactoyllysine; alternate. N6-(2-hydroxyisobutyryl)lysine; alternate is present on lysine 86. Lysine 86 is modified (N6,N6,N6-trimethyllysine; alternate). Arginine 87 and arginine 93 each carry omega-N-methylarginine. The residue at position 109 (lysine 109) is an N6-(beta-hydroxybutyryl)lysine; alternate. Lysine 109 is modified (N6-lactoyllysine; alternate). Lysine 109 is subject to N6-(2-hydroxyisobutyryl)lysine; alternate. N6-glutaryllysine; alternate is present on lysine 109. Position 109 is an N6-methyllysine; alternate (lysine 109). Serine 113 carries O-linked (GlcNAc) serine glycosylation. At threonine 116 the chain carries Phosphothreonine. At lysine 117 the chain carries N6-(beta-hydroxybutyryl)lysine; alternate. N6-lactoyllysine; alternate occurs at positions 117 and 121. An N6-(2-hydroxyisobutyryl)lysine; alternate mark is found at lysine 117 and lysine 121. 2 positions are modified to N6-glutaryllysine; alternate: lysine 117 and lysine 121. Residues lysine 117 and lysine 121 each carry the N6-succinyllysine; alternate modification. Lysine 117 is subject to N6-methylated lysine; alternate. Lysine 121 participates in a covalent cross-link: Glycyl lysine isopeptide (Lys-Gly) (interchain with G-Cter in ubiquitin); alternate.

It belongs to the histone H2B family. In terms of assembly, the nucleosome is a histone octamer containing two molecules each of H2A, H2B, H3 and H4 assembled in one H3-H4 heterotetramer and two H2A-H2B heterodimers. The octamer wraps approximately 147 bp of DNA. Post-translationally, monoubiquitination at Lys-35 (H2BK34Ub) by the MSL1/MSL2 dimer is required for histone H3 'Lys-4' (H3K4me) and 'Lys-79' (H3K79me) methylation and transcription activation at specific gene loci, such as HOXA9 and MEIS1 loci. Similarly, monoubiquitination at Lys-121 (H2BK120Ub) by the RNF20/40 complex gives a specific tag for epigenetic transcriptional activation and is also prerequisite for histone H3 'Lys-4' and 'Lys-79' methylation. It also functions cooperatively with the FACT dimer to stimulate elongation by RNA polymerase II. H2BK120Ub also acts as a regulator of mRNA splicing: deubiquitination by USP49 is required for efficient cotranscriptional splicing of a large set of exons. In terms of processing, phosphorylated on Ser-15 (H2BS14ph) by STK4/MST1 during apoptosis; which facilitates apoptotic chromatin condensation. Also phosphorylated on Ser-15 in response to DNA double strand breaks (DSBs), and in correlation with somatic hypermutation and immunoglobulin class-switch recombination. Phosphorylation at Ser-37 (H2BS36ph) by AMPK in response to stress promotes transcription. GlcNAcylation at Ser-113 promotes monoubiquitination of Lys-121. It fluctuates in response to extracellular glucose, and associates with transcribed genes. Post-translationally, ADP-ribosylated by PARP1 or PARP2 on Ser-7 (H2BS6ADPr) in response to DNA damage. H2BS6ADPr promotes recruitment of CHD1L. Mono-ADP-ribosylated on Glu-3 (H2BE2ADPr) by PARP3 in response to single-strand breaks. Poly ADP-ribosylation on Glu-36 (H2BE35ADPr) by PARP1 regulates adipogenesis: it inhibits phosphorylation at Ser-37 (H2BS36ph), thereby blocking expression of pro-adipogenetic genes. In terms of processing, crotonylation (Kcr) is specifically present in male germ cells and marks testis-specific genes in post-meiotic cells, including X-linked genes that escape sex chromosome inactivation in haploid cells. Crotonylation marks active promoters and enhancers and confers resistance to transcriptional repressors. It is also associated with post-meiotically activated genes on autosomes. Hydroxybutyrylation of histones is induced by starvation. Post-translationally, lactylated in macrophages by EP300/P300 by using lactoyl-CoA directly derived from endogenous or exogenous lactate, leading to stimulates gene transcription.

The protein resides in the nucleus. It is found in the chromosome. Core component of nucleosome. Nucleosomes wrap and compact DNA into chromatin, limiting DNA accessibility to the cellular machineries which require DNA as a template. Histones thereby play a central role in transcription regulation, DNA repair, DNA replication and chromosomal stability. DNA accessibility is regulated via a complex set of post-translational modifications of histones, also called histone code, and nucleosome remodeling. This Mus musculus (Mouse) protein is H2B.U histone 2.